A 569-amino-acid chain; its full sequence is Peptide transporter PTR_C (569 aa).

The span at 1–25 (MSQNVDEKVVHDDASVIRSVDRSES) shows a compositional bias: basic and acidic residues. The segment at 1–43 (MSQNVDEKVVHDDASVIRSVDRSESDSYPDSVSPEGAEPSEEE) is disordered. Residues 54-74 (VPLACWLVAIVELAERFSYYG) form a helical membrane-spanning segment. N-linked (GlcNAc...) asparagine glycosylation occurs at Asn98. The next 3 membrane-spanning stretches (helical) occupy residues 104–124 (ALSY…AWVA), 134–154 (ISIF…TSLP), and 159–179 (NTSL…TGGV). N-linked (GlcNAc...) asparagine glycosylation occurs at Asn212. 8 consecutive transmembrane segments (helical) span residues 215 to 235 (IQNV…SVIA), 245 to 265 (FWAA…ALFL), 322 to 342 (ALYA…YGQM), 366 to 386 (IDSI…YPFI), 398 to 418 (IFWG…LQHF), 444 to 464 (VALQ…ASIT), 479 to 499 (SFIM…GIAL), and 510 to 530 (WTYT…WFLF).

It belongs to the major facilitator superfamily. Proton-dependent oligopeptide transporter (POT/PTR) (TC 2.A.17) family.

It localises to the cell membrane. The enzyme catalyses a dipeptide(out) + H(+)(out) = a dipeptide(in) + H(+)(in). It carries out the reaction an L-amino acid tripeptide(out) + H(+)(out) = an L-amino acid tripeptide(in) + H(+)(in). Its function is as follows. Peptide transporter that exploits the inwardly directed proton motive force to facilitate the cellular uptake of di/tripeptides. Shows strong uptake specificity towards the dipeptides Tyr-Phe and Leu-Gly and the tripeptide Phe-Gly-Gly, when compared to PTR_A and PTR_B. Also able to import peptide-based antifungals such as the peptide-nucleoside drug nikkomycin Z as well as the glucosamine-6-phosphate synthase inhibitor, L-norvalyl-N3-(4-methoxyfumaroyl)-L-2,3-diaminopropionoic acid (Nva-FMDP). The polypeptide is Peptide transporter PTR_C (Candidozyma auris (Yeast)).